Consider the following 110-residue polypeptide: Glycine-rich selenoprotein (110 aa).

Topologically, residues 1-20 are lumenal; sequence MVYIDHNGRVWEKRPWDWRR. Residues 21–41 traverse the membrane as a helical; Signal-anchor for type III membrane protein segment; that stretch reads IVELFVGIWFAIKQLFLTFLA. Topologically, residues 42 to 110 are cytoplasmic; the sequence is PFTGNNNQAN…CNMPAGGGUG (69 aa). The disordered stretch occupies residues 51 to 110; that stretch reads NPRRGNGWGGGGGWGGGGGGGGGGGGGRPGSGSGGLRPNRRIGRIQPTMSCNMPAGGGUG. Positions 56 to 85 are enriched in gly residues; the sequence is NGWGGGGGWGGGGGGGGGGGGGRPGSGSGG. A non-standard amino acid (selenocysteine) is located at residue Sec109.

The protein localises to the golgi apparatus membrane. Plays a role in the life span. May be involved in regulating the redox state of the cell and possesses anticarcinogenic properties. This is Glycine-rich selenoprotein (SelG) from Drosophila melanogaster (Fruit fly).